We begin with the raw amino-acid sequence, 161 residues long: Suppressor of kinetochore protein 1 (161 aa).

An interaction with the F-box domain of F-box proteins region spans residues 102-161 (VLASNYLDIKPLLDTGCKTVANMIRGKSPEDIRKTFNIPNDFTPEEEEQIRKENEWAEDR).

It belongs to the SKP1 family. Essential component of the E3 ubiquitin ligase Skp1-Cullin-1-F-box (SCF) complex. Interacts with cul1, fbh1, mcs2, pip1, pof1, pof2, pof3, pof4, pof5, pof6, pof7, pof8, pof9, pof10, pof11, pof12, pof13, pof14, pop1, pop2 and tfb3. Forms a complex with pof6 and sip1. Component of the RAVE complex composed of rav1, rav2 and skp1.

It localises to the cytoplasm. The protein resides in the nucleus. In terms of biological role, required for cig2 degradation in the G2 and M phases of the cell cycle. Together with pof6, essential for septum processing and cell separation. Involved in mitotic progression, essential for the execution of anaphase B; required for coordinated structural alterations of mitotic spindles and segregation of nuclear membrane structures at anaphase. Involved in the DNA damage checkpoint pathway and maintenance of genome integrity. Component of the RAVE complex which is required for stable assembly of the vacuolar ATPase complex V-ATPase. The polypeptide is Suppressor of kinetochore protein 1 (Schizosaccharomyces pombe (strain 972 / ATCC 24843) (Fission yeast)).